The following is a 271-amino-acid chain: Aminoglycoside 3'-phosphotransferase (271 aa).

D198 (proton acceptor) is an active-site residue.

Belongs to the aminoglycoside phosphotransferase family.

The catalysed reaction is kanamycin A + ATP = kanamycin 3'-phosphate + ADP + H(+). Its function is as follows. Resistance to kanamycin and structurally-related aminoglycosides, including amikacin. In Escherichia coli, this protein is Aminoglycoside 3'-phosphotransferase (aphA).